The chain runs to 4753 residues: Dynein heavy chain domain-containing protein 1 (4753 aa).

Coiled-coil stretches lie at residues 826–858 and 936–991; these read IHAI…ALHE and KLQQ…LSEL. Positions 2688 to 2766 are disordered; it reads HLGKDHQESE…SRGMKESISH (79 aa). The segment covering 2695–2712 has biased composition (acidic residues); it reads ESEEEEEEERVPEVESEG. Residues 2740 to 2751 are compositionally biased toward polar residues; it reads RVSNSRDPSLTP. 3 coiled-coil regions span residues 3125–3227, 3590–3651, and 4431–4460; these read LQQQ…MSKA, MRNQ…QGSK, and GAQL…LTHV. The tract at residues 3580-3657 is disordered; the sequence is ALTEGRGKGL…QGSKPAYETQ (78 aa). Residues 3602 to 3615 are compositionally biased toward acidic residues; it reads KEEDDESEESNEAE. The segment covering 3616–3631 has biased composition (basic and acidic residues); that stretch reads DQTKEQKAEERKNEQE. Over residues 3632–3641 the composition is skewed to acidic residues; that stretch reads KEQEENEEKE. The interval 4669 to 4697 is disordered; sequence ALQDSPSSQPSPLPPVSISTQAPGTSDLP.

It belongs to the dynein heavy chain family. In terms of tissue distribution, expressed in spermatozoa (at protein level).

It is found in the cell projection. The protein localises to the cilium. Its subcellular location is the flagellum. In terms of biological role, essential for the normal assembly and function of sperm flagella axonemes. This chain is Dynein heavy chain domain-containing protein 1 (DNHD1), found in Homo sapiens (Human).